The following is a 196-amino-acid chain: ATP-dependent Clp protease proteolytic subunit (196 aa).

Residue S101 is the Nucleophile of the active site. The active site involves H126.

The protein belongs to the peptidase S14 family. In terms of assembly, component of the chloroplastic Clp protease core complex.

It is found in the plastid. The protein resides in the chloroplast stroma. The catalysed reaction is Hydrolysis of proteins to small peptides in the presence of ATP and magnesium. alpha-casein is the usual test substrate. In the absence of ATP, only oligopeptides shorter than five residues are hydrolyzed (such as succinyl-Leu-Tyr-|-NHMec, and Leu-Tyr-Leu-|-Tyr-Trp, in which cleavage of the -Tyr-|-Leu- and -Tyr-|-Trp bonds also occurs).. Its function is as follows. Cleaves peptides in various proteins in a process that requires ATP hydrolysis. Has a chymotrypsin-like activity. Plays a major role in the degradation of misfolded proteins. This Pinus thunbergii (Japanese black pine) protein is ATP-dependent Clp protease proteolytic subunit.